The chain runs to 412 residues: Multifunctional CCA protein (412 aa).

Positions 8 and 11 each coordinate ATP. Positions 8 and 11 each coordinate CTP. Residues aspartate 21 and aspartate 23 each contribute to the Mg(2+) site. ATP-binding residues include arginine 91, arginine 137, and arginine 140. Residues arginine 91, arginine 137, and arginine 140 each contribute to the CTP site. Residues 228 to 329 (TGIHTMMVLA…LKVFDKADAW (102 aa)) enclose the HD domain.

The protein belongs to the tRNA nucleotidyltransferase/poly(A) polymerase family. Bacterial CCA-adding enzyme type 1 subfamily. As to quaternary structure, monomer. Can also form homodimers and oligomers. Mg(2+) is required as a cofactor. Requires Ni(2+) as cofactor.

The enzyme catalyses a tRNA precursor + 2 CTP + ATP = a tRNA with a 3' CCA end + 3 diphosphate. The catalysed reaction is a tRNA with a 3' CCA end + 2 CTP + ATP = a tRNA with a 3' CCACCA end + 3 diphosphate. Its function is as follows. Catalyzes the addition and repair of the essential 3'-terminal CCA sequence in tRNAs without using a nucleic acid template. Adds these three nucleotides in the order of C, C, and A to the tRNA nucleotide-73, using CTP and ATP as substrates and producing inorganic pyrophosphate. tRNA 3'-terminal CCA addition is required both for tRNA processing and repair. Also involved in tRNA surveillance by mediating tandem CCA addition to generate a CCACCA at the 3' terminus of unstable tRNAs. While stable tRNAs receive only 3'-terminal CCA, unstable tRNAs are marked with CCACCA and rapidly degraded. The polypeptide is Multifunctional CCA protein (Aeromonas hydrophila subsp. hydrophila (strain ATCC 7966 / DSM 30187 / BCRC 13018 / CCUG 14551 / JCM 1027 / KCTC 2358 / NCIMB 9240 / NCTC 8049)).